Here is a 352-residue protein sequence, read N- to C-terminus: Photosystem II D2 protein (352 aa).

Residues 40–60 form a helical membrane-spanning segment; that stretch reads CAYMALGGWLTGTTFVTSWYT. Position 117 (H117) interacts with chlorophyll a. A helical transmembrane segment spans residues 124–140; sequence GFMLRQFEIARLVGIRP. Pheophytin a contacts are provided by Q129 and N142. The helical transmembrane segment at 152 to 165 threads the bilayer; the sequence is VFVSVFLMYPLGQS. H197 serves as a coordination point for chlorophyll a. A helical membrane pass occupies residues 207–227; sequence GALLCAIHGATVENTLFEDGD. H214 and F261 together coordinate a plastoquinone. A Fe cation-binding site is contributed by H214. H268 contributes to the Fe cation binding site. The chain crosses the membrane as a helical span at residues 278 to 294; it reads GLWTSSIGIIGLALNLR.

The protein belongs to the reaction center PufL/M/PsbA/D family. In terms of assembly, PSII is composed of 1 copy each of membrane proteins PsbA, PsbB, PsbC, PsbD, PsbE, PsbF, PsbH, PsbI, PsbJ, PsbK, PsbL, PsbM, PsbT, PsbX, PsbY, PsbZ, Psb30/Ycf12, peripheral proteins PsbO, CyanoQ (PsbQ), PsbU, PsbV and a large number of cofactors. It forms dimeric complexes. The D1/D2 heterodimer binds P680, chlorophylls that are the primary electron donor of PSII, and subsequent electron acceptors. It shares a non-heme iron and each subunit binds pheophytin, quinone, additional chlorophylls, carotenoids and lipids. There is also a Cl(-1) ion associated with D1 and D2, which is required for oxygen evolution. The PSII complex binds additional chlorophylls, carotenoids and specific lipids. is required as a cofactor.

It localises to the cellular thylakoid membrane. It catalyses the reaction 2 a plastoquinone + 4 hnu + 2 H2O = 2 a plastoquinol + O2. In terms of biological role, photosystem II (PSII) is a light-driven water:plastoquinone oxidoreductase that uses light energy to abstract electrons from H(2)O, generating O(2) and a proton gradient subsequently used for ATP formation. It consists of a core antenna complex that captures photons, and an electron transfer chain that converts photonic excitation into a charge separation. The D1/D2 (PsbA/PsbD) reaction center heterodimer binds P680, the primary electron donor of PSII as well as several subsequent electron acceptors. D2 is needed for assembly of a stable PSII complex. This Synechococcus sp. (strain RCC307) protein is Photosystem II D2 protein.